The following is a 416-amino-acid chain: RNA-editing ligase 2, mitochondrial (416 aa).

The transit peptide at 1-17 (MLRRLGVRHFRRTPLLF) directs the protein to the mitochondrion. ATP is bound by residues 29–31 (TEI), 56–62 (EKVHGAN), arginine 79, glutamate 126, phenylalanine 173, and 269–271 (KFK). Lysine 57 (N6-AMP-lysine intermediate) is an active-site residue.

Belongs to the RNA ligase 2 family. Component of the RNA editing complex, a 1600 kDa complex composed of at least 20 proteins.

It localises to the mitochondrion. It catalyses the reaction ATP + (ribonucleotide)n-3'-hydroxyl + 5'-phospho-(ribonucleotide)m = (ribonucleotide)n+m + AMP + diphosphate.. RNA editing in kinetoplastid mitochondria inserts and deletes uridylates at multiple sites in pre-mRNAs as directed by guide RNAs. In Trypanosoma brucei brucei (strain 927/4 GUTat10.1), this protein is RNA-editing ligase 2, mitochondrial (REL2).